We begin with the raw amino-acid sequence, 364 residues long: Putative zinc metalloprotease all3971 (364 aa).

His-17 contributes to the Zn(2+) binding site. The active site involves Glu-18. A Zn(2+)-binding site is contributed by His-21. The next 3 membrane-spanning stretches (helical) occupy residues 92–114 (AIVI…LAQV), 281–303 (LFFF…LPAL), and 329–346 (VMQT…FLIV). One can recognise a PDZ domain in the interval 103-188 (LIFAYMLLLA…KSIQLTVARG (86 aa)).

Belongs to the peptidase M50B family. Zn(2+) serves as cofactor.

It is found in the cell inner membrane. This chain is Putative zinc metalloprotease all3971, found in Nostoc sp. (strain PCC 7120 / SAG 25.82 / UTEX 2576).